Reading from the N-terminus, the 807-residue chain is Glycerol-3-phosphate acyltransferase (807 aa).

The short motif at 308–313 is the HXXXXD motif element; it reads CHRSHM.

This sequence belongs to the GPAT/DAPAT family.

The protein localises to the cell inner membrane. The enzyme catalyses sn-glycerol 3-phosphate + an acyl-CoA = a 1-acyl-sn-glycero-3-phosphate + CoA. Its pathway is phospholipid metabolism; CDP-diacylglycerol biosynthesis; CDP-diacylglycerol from sn-glycerol 3-phosphate: step 1/3. The sequence is that of Glycerol-3-phosphate acyltransferase from Shewanella sp. (strain MR-7).